The following is a 443-amino-acid chain: Glutamate-1-semialdehyde 2,1-aminomutase (443 aa).

K281 carries the post-translational modification N6-(pyridoxal phosphate)lysine.

It belongs to the class-III pyridoxal-phosphate-dependent aminotransferase family. HemL subfamily. Homodimer. It depends on pyridoxal 5'-phosphate as a cofactor.

It is found in the cytoplasm. The enzyme catalyses (S)-4-amino-5-oxopentanoate = 5-aminolevulinate. It participates in porphyrin-containing compound metabolism; protoporphyrin-IX biosynthesis; 5-aminolevulinate from L-glutamyl-tRNA(Glu): step 2/2. This is Glutamate-1-semialdehyde 2,1-aminomutase from Leptospira interrogans serogroup Icterohaemorrhagiae serovar Lai (strain 56601).